The sequence spans 38 residues: GVDKPGCRYMFGGCVQDDDCCPHLGCKRKGLYCAWDGT.

Intrachain disulfides connect cysteine 7/cysteine 21, cysteine 14/cysteine 26, and cysteine 20/cysteine 33. A Threonine amide modification is found at threonine 38.

The protein belongs to the neurotoxin 10 (Hwtx-1) family. 28 (Jztx-11) subfamily. In terms of tissue distribution, expressed by the venom gland.

The protein localises to the secreted. In terms of biological role, paralytic toxin that inhibits insect voltage-gated sodium (Nav) and calcium (Cav) channels in P.americana (American cockroach) dorsal unpaired median (DUM) neurons, and inhibits the B.germanica (German cockroach) Nav channel (BgNaV1). Also shows a delay in fast inactivation when tested on BgNaV1. May act as a gating-modifier toxin on Nav and as a pore blocker on Cav. In vivo, reversibly paralyzes both L.cuprina (Australian sheep blowfly) and M.domestica (housefly), but does not affect larvae of H.armigera (cotton bollworms). This Monocentropus balfouri (Socotra Island blue baboon tarantula) protein is Mu/omega-theraphotoxin-Mb1a.